Consider the following 1048-residue polypeptide: uncharacterized protein (1048 aa).

The disordered stretch occupies residues 601–629; it reads ENQINEEQQTNVENEQQTEQQFENEDKET. Residues 605 to 621 show a composition bias toward low complexity; it reads NEEQQTNVENEQQTEQQ.

This is an uncharacterized protein from Methanocaldococcus jannaschii (strain ATCC 43067 / DSM 2661 / JAL-1 / JCM 10045 / NBRC 100440) (Methanococcus jannaschii).